We begin with the raw amino-acid sequence, 303 residues long: Elongation factor Ts (303 aa).

The tract at residues 79–82 is involved in Mg(2+) ion dislocation from EF-Tu; that stretch reads TDFT.

Belongs to the EF-Ts family.

It is found in the cytoplasm. Functionally, associates with the EF-Tu.GDP complex and induces the exchange of GDP to GTP. It remains bound to the aminoacyl-tRNA.EF-Tu.GTP complex up to the GTP hydrolysis stage on the ribosome. The polypeptide is Elongation factor Ts (Magnetococcus marinus (strain ATCC BAA-1437 / JCM 17883 / MC-1)).